A 77-amino-acid chain; its full sequence is Metallothionein-like protein 2 (77 aa).

It belongs to the metallothionein superfamily. Type 15 family.

In terms of biological role, metallothioneins have a high content of cysteine residues that bind various heavy metals. This is Metallothionein-like protein 2 (MT1A) from Trifolium repens (Creeping white clover).